Reading from the N-terminus, the 868-residue chain is Translation initiation factor IF-2 (868 aa).

Disordered regions lie at residues 158 to 178 (VKEE…DELT) and 200 to 269 (KKEE…KYRE). The span at 200-209 (KKEEVKPEKV) shows a compositional bias: basic and acidic residues. Basic residues predominate over residues 249-260 (RGGRSKFKKKKG). A tr-type G domain is found at 368-537 (GRAPVVTIMG…LLQSEVLELK (170 aa)). The tract at residues 377 to 384 (GHVDHGKT) is G1. 377-384 (GHVDHGKT) serves as a coordination point for GTP. Positions 402–406 (GITQH) are G2. The G3 stretch occupies residues 423–426 (DTPG). GTP is bound by residues 423 to 427 (DTPGH) and 477 to 480 (NKMD). The tract at residues 477–480 (NKMD) is G4. The interval 513 to 515 (SAK) is G5.

This sequence belongs to the TRAFAC class translation factor GTPase superfamily. Classic translation factor GTPase family. IF-2 subfamily.

The protein resides in the cytoplasm. Its function is as follows. One of the essential components for the initiation of protein synthesis. Protects formylmethionyl-tRNA from spontaneous hydrolysis and promotes its binding to the 30S ribosomal subunits. Also involved in the hydrolysis of GTP during the formation of the 70S ribosomal complex. In Legionella pneumophila (strain Lens), this protein is Translation initiation factor IF-2.